Here is a 374-residue protein sequence, read N- to C-terminus: Phosphate-binding protein PstS1 (374 aa).

Positions 1 to 23 are cleaved as a signal peptide; that stretch reads MKIRLHTLLAVLTAAPLLLAAAG. A lipid anchor (N-palmitoyl cysteine) is attached at Cys24. The S-diacylglycerol cysteine moiety is linked to residue Cys24. Residues 25–48 are disordered; sequence GSKPPSGSPETGAGAGTVATTPAS. Residues 58–60, Ser88, Asp106, and 189–191 each bind phosphate; these read STL and SGD.

It belongs to the PstS family. As to quaternary structure, the complex is composed of two ATP-binding proteins (PstB), two transmembrane proteins (PstC and PstA) and a solute-binding protein (PstS).

It is found in the cell membrane. It localises to the secreted. Functionally, functions in inorganic phosphate uptake, a phosphate-binding protein, although probably not the main uptake protein under phosphate starvation. Part of the ABC transporter complex PstSACB involved in phosphate import. In terms of biological role, a host TLR2 agonist (toll-like receptor), requires both host TLR1 and TLR2 as coreceptors. The polypeptide is Phosphate-binding protein PstS1 (pstS1) (Mycobacterium bovis (strain BCG / Pasteur 1173P2)).